The primary structure comprises 301 residues: Small ribosomal subunit protein uS3 (301 aa).

The region spanning 39–107 is the KH type-2 domain; it reads VREYLKAKLK…PVAVNIEEVR (69 aa). The disordered stretch occupies residues 211–301; the sequence is GESPGAKLDA…AAAADGTKTE (91 aa). Positions 224–244 are enriched in basic and acidic residues; that stretch reads DEERKPRGPRRDARPGSDRPA. The segment covering 245–257 has biased composition (low complexity); the sequence is PRGARAPRAPAGG.

This sequence belongs to the universal ribosomal protein uS3 family. In terms of assembly, part of the 30S ribosomal subunit. Forms a tight complex with proteins S10 and S14.

Functionally, binds the lower part of the 30S subunit head. Binds mRNA in the 70S ribosome, positioning it for translation. The chain is Small ribosomal subunit protein uS3 from Polaromonas sp. (strain JS666 / ATCC BAA-500).